We begin with the raw amino-acid sequence, 75 residues long: MGGISIWQLLIIVAIIVLLFGTKKLRTLGTDLGESVKGFKKAMNEDEPKDAEFKSLNKDESATAGSEKVKDKEQA.

The helical transmembrane segment at 1–21 threads the bilayer; the sequence is MGGISIWQLLIIVAIIVLLFG. Residues 50–75 are disordered; it reads DAEFKSLNKDESATAGSEKVKDKEQA.

The protein belongs to the TatA/E family. As to quaternary structure, the Tat system comprises two distinct complexes: a TatABC complex, containing multiple copies of TatA, TatB and TatC subunits, and a separate TatA complex, containing only TatA subunits. Substrates initially bind to the TatABC complex, which probably triggers association of the separate TatA complex to form the active translocon.

Its subcellular location is the cell inner membrane. In terms of biological role, part of the twin-arginine translocation (Tat) system that transports large folded proteins containing a characteristic twin-arginine motif in their signal peptide across membranes. TatA could form the protein-conducting channel of the Tat system. This Mannheimia succiniciproducens (strain KCTC 0769BP / MBEL55E) protein is Sec-independent protein translocase protein TatA.